The following is a 494-amino-acid chain: UPF0371 protein SPT_0390 (494 aa).

Belongs to the UPF0371 family.

The chain is UPF0371 protein SPT_0390 from Streptococcus pneumoniae (strain Taiwan19F-14).